We begin with the raw amino-acid sequence, 117 residues long: Large ribosomal subunit protein bL19 (117 aa).

It belongs to the bacterial ribosomal protein bL19 family.

This protein is located at the 30S-50S ribosomal subunit interface and may play a role in the structure and function of the aminoacyl-tRNA binding site. The chain is Large ribosomal subunit protein bL19 from Photorhabdus laumondii subsp. laumondii (strain DSM 15139 / CIP 105565 / TT01) (Photorhabdus luminescens subsp. laumondii).